Reading from the N-terminus, the 156-residue chain is NAD(P)H-quinone oxidoreductase subunit N (156 aa).

It belongs to the complex I NdhN subunit family. NDH-1 can be composed of about 15 different subunits; different subcomplexes with different compositions have been identified which probably have different functions.

The protein localises to the cellular thylakoid membrane. It carries out the reaction a plastoquinone + NADH + (n+1) H(+)(in) = a plastoquinol + NAD(+) + n H(+)(out). It catalyses the reaction a plastoquinone + NADPH + (n+1) H(+)(in) = a plastoquinol + NADP(+) + n H(+)(out). NDH-1 shuttles electrons from an unknown electron donor, via FMN and iron-sulfur (Fe-S) centers, to quinones in the respiratory and/or the photosynthetic chain. The immediate electron acceptor for the enzyme in this species is believed to be plastoquinone. Couples the redox reaction to proton translocation, and thus conserves the redox energy in a proton gradient. Cyanobacterial NDH-1 also plays a role in inorganic carbon-concentration. The sequence is that of NAD(P)H-quinone oxidoreductase subunit N from Prochlorococcus marinus (strain MIT 9515).